Consider the following 744-residue polypeptide: Polyribonucleotide nucleotidyltransferase (744 aa).

Residues D515 and D521 each contribute to the Mg(2+) site. The region spanning 581–640 (PRVITVQVPVDKIGEVIGPKGKMINQIQDDTGADISIEDDGTVFIGATDGPSAEAARQAI) is the KH domain. One can recognise an S1 motif domain in the interval 652 to 724 (GERFVGTVVK…PRGKLSLHAV (73 aa)).

This sequence belongs to the polyribonucleotide nucleotidyltransferase family. Mg(2+) is required as a cofactor.

The protein resides in the cytoplasm. The catalysed reaction is RNA(n+1) + phosphate = RNA(n) + a ribonucleoside 5'-diphosphate. Its function is as follows. Involved in mRNA degradation. Catalyzes the phosphorolysis of single-stranded polyribonucleotides processively in the 3'- to 5'-direction. This chain is Polyribonucleotide nucleotidyltransferase, found in Beutenbergia cavernae (strain ATCC BAA-8 / DSM 12333 / CCUG 43141 / JCM 11478 / NBRC 16432 / NCIMB 13614 / HKI 0122).